The chain runs to 681 residues: Minichromosome maintenance domain-containing protein 2 (681 aa).

Residue Ser292 is modified to Phosphoserine. The MCM domain maps to 533-621 (KQFTTEDFEK…LIAALLFEIS (89 aa)).

Functionally, plays an important role in meiotic recombination and associated DNA double-strand break repair. The protein is Minichromosome maintenance domain-containing protein 2 (Mcmdc2) of Rattus norvegicus (Rat).